The chain runs to 529 residues: Bifunctional purine biosynthesis protein PurH (529 aa).

The region spanning 1 to 148 is the MGS-like domain; the sequence is MQQRRPVRRA…KNHKDVAIVV (148 aa). Lys-287 is subject to N6-acetyllysine.

This sequence belongs to the PurH family.

It carries out the reaction (6R)-10-formyltetrahydrofolate + 5-amino-1-(5-phospho-beta-D-ribosyl)imidazole-4-carboxamide = 5-formamido-1-(5-phospho-D-ribosyl)imidazole-4-carboxamide + (6S)-5,6,7,8-tetrahydrofolate. The catalysed reaction is IMP + H2O = 5-formamido-1-(5-phospho-D-ribosyl)imidazole-4-carboxamide. Its pathway is purine metabolism; IMP biosynthesis via de novo pathway; 5-formamido-1-(5-phospho-D-ribosyl)imidazole-4-carboxamide from 5-amino-1-(5-phospho-D-ribosyl)imidazole-4-carboxamide (10-formyl THF route): step 1/1. The protein operates within purine metabolism; IMP biosynthesis via de novo pathway; IMP from 5-formamido-1-(5-phospho-D-ribosyl)imidazole-4-carboxamide: step 1/1. The polypeptide is Bifunctional purine biosynthesis protein PurH (Escherichia coli O45:K1 (strain S88 / ExPEC)).